The primary structure comprises 33 residues: Trypsin inhibitor 1 (33 aa).

Intrachain disulfides connect Cys1/Cys17, Cys8/Cys21, and Cys16/Cys32.

In terms of tissue distribution, expressed in leaves and fruit flesh (at protein level).

Its function is as follows. Inhibits trypsin (IC(50)=471 nM). The polypeptide is Trypsin inhibitor 1 (Beta vulgaris subsp. vulgaris (Beet)).